The sequence spans 271 residues: High mobility group protein homolog TDP-1 (271 aa).

In terms of domain architecture, DEK-C spans 8–63 (GPLPTDIEETVITIMREEGVRYITAKILRMRLESKYQMEFGPHKAAIDDIVARAMQ). The tract at residues 75 to 118 (LKEKDASKSSGGKGSKRARSAGAEAPSKTKKEMTEKPKKPADYP) is disordered. Over residues 101–116 (SKTKKEMTEKPKKPAD) the composition is skewed to basic and acidic residues. 2 DNA-binding regions (HMG box) span residues 118–186 (PKPA…DEYK) and 206–270 (PKRA…AALP).

It is found in the nucleus. Unknown. May play a role in transcription and/or DNA replication. It is not known whether this protein is DNA sequence binding-specific or not. The polypeptide is High mobility group protein homolog TDP-1 (Trypanosoma brucei rhodesiense).